The chain runs to 270 residues: MQPAKNLLFSSLLFSSLLFSSAARAASEDGGRGPYVQADLAYAAERITHDYPKPTGTGKNKISTVSDYFRNIRTHSVHPRVSVGYDFGSWRIAADYARYRKWNNNKYSVSIKELLRNDNSASGVRGHLNIQTQKTEHQENGTFHAVSSLGLSTIYDFDTGSRFKPYIGMRVAYGHVRHQVRSVEQETEIITTYPSNGGGKVSLSSKMPPKSAHHQSNSIRRVGLGVIAGVGFDITPNLTLDTGYRYHNWGRLENTRFKTHEASLGMRYRF.

The first 25 residues, 1–25, serve as a signal peptide directing secretion; the sequence is MQPAKNLLFSSLLFSSLLFSSAARA. Residues 26-35 are Extracellular-facing; it reads ASEDGGRGPY. The beta stranded transmembrane segment at 36 to 44 threads the bilayer; sequence VQADLAYAA. Over 45 to 76 the chain is Periplasmic; the sequence is ERITHDYPKPTGTGKNKISTVSDYFRNIRTHS. Residues 77-85 traverse the membrane as a beta stranded segment; the sequence is VHPRVSVGY. At 86-89 the chain is on the extracellular side; the sequence is DFGS. A beta stranded transmembrane segment spans residues 90–96; that stretch reads WRIAADY. Residues 97 to 142 are Periplasmic-facing; the sequence is ARYRKWNNNKYSVSIKELLRNDNSASGVRGHLNIQTQKTEHQENGT. A beta stranded membrane pass occupies residues 143 to 157; sequence FHAVSSLGLSTIYDF. At 158–162 the chain is on the extracellular side; it reads DTGSR. Residues 163–173 traverse the membrane as a beta stranded segment; it reads FKPYIGMRVAY. The Periplasmic portion of the chain corresponds to 174-221; the sequence is GHVRHQVRSVEQETEIITTYPSNGGGKVSLSSKMPPKSAHHQSNSIRR. Residues 194-217 are disordered; sequence PSNGGGKVSLSSKMPPKSAHHQSN. Residues 222–234 form a beta stranded membrane-spanning segment; that stretch reads VGLGVIAGVGFDI. The Extracellular segment spans residues 235 to 237; it reads TPN. Residues 238 to 246 traverse the membrane as a beta stranded segment; sequence LTLDTGYRY. Over 247–261 the chain is Periplasmic; it reads HNWGRLENTRFKTHE. A beta stranded transmembrane segment spans residues 262 to 270; sequence ASLGMRYRF.

This sequence belongs to the opacity porin family. Homotrimer.

The protein resides in the cell outer membrane. This protein serves as a porin. This chain is Outer membrane protein P.IIC (piiC), found in Neisseria gonorrhoeae.